The chain runs to 326 residues: Putative ribose-phosphate pyrophosphokinase 2 (326 aa).

ATP contacts are provided by residues 43–45 and 102–103; these read DGE and RQ. Residue histidine 136 participates in Mg(2+) binding. D-ribose 5-phosphate-binding positions include aspartate 225 and 229–233; that span reads NTGKT.

As to quaternary structure, homohexamer. Mg(2+) serves as cofactor.

The protein localises to the cytoplasm. It carries out the reaction D-ribose 5-phosphate + ATP = 5-phospho-alpha-D-ribose 1-diphosphate + AMP + H(+). The protein operates within metabolic intermediate biosynthesis; 5-phospho-alpha-D-ribose 1-diphosphate biosynthesis; 5-phospho-alpha-D-ribose 1-diphosphate from D-ribose 5-phosphate (route I): step 1/1. Its function is as follows. Involved in the biosynthesis of the central metabolite phospho-alpha-D-ribosyl-1-pyrophosphate (PRPP) via the transfer of pyrophosphoryl group from ATP to 1-hydroxyl of ribose-5-phosphate (Rib-5-P). The polypeptide is Putative ribose-phosphate pyrophosphokinase 2 (Streptococcus pyogenes serotype M6 (strain ATCC BAA-946 / MGAS10394)).